The primary structure comprises 568 residues: Envelope glycoprotein E (568 aa).

A signal peptide spans 1-20 (MMPATLAGLALAVTVATMFA). Over 21 to 422 (QRVDSTTIHH…GGGPGNSKRR (402 aa)) the chain is Virion surface. Residues N88, N179, and N248 are each glycosylated (N-linked (GlcNAc...) asparagine; by host). The cysteines at positions 271 and 280 are disulfide-linked. Residues 423 to 443 (AAVLGAAVWIALTLLILGGLG) traverse the membrane as a helical segment. Residues 444-568 (AYVAVNKKCL…ANKTFPSQRY (125 aa)) are Intravirion-facing. Positions 465–468 (KPTL) match the Internalization motif motif. Residues 470–534 (THAHTYTSLP…SRRNSFGPTL (65 aa)) form a disordered region. The segment at 482 to 497 (GDLSLEQDAEDEDEDE) is acidic. A compositionally biased stretch (acidic residues) spans 486-500 (LEQDAEDEDEDEEEL). A compositionally biased stretch (basic residues) spans 515–526 (KSSRSPSRRSSR).

Belongs to the alphaherpesvirinae glycoprotein E family. In terms of assembly, interacts with gI. In terms of processing, phosphorylated on serines within the acidic cluster. Phosphorylation determines whether endocytosed viral gE traffics to the trans-Golgi network or recycles to the cell membrane.

The protein localises to the virion membrane. The protein resides in the host cell membrane. Its subcellular location is the host cell junction. It is found in the host Golgi apparatus membrane. It localises to the host endosome membrane. In terms of biological role, in epithelial cells, the heterodimer gE/gI is required for the cell-to-cell spread of the virus, by sorting nascent virions to cell junctions. Once the virus reaches the cell junctions, virus particles can spread to adjacent cells extremely rapidly through interactions with cellular receptors that accumulate at these junctions. Implicated in basolateral spread in polarized cells. In neuronal cells, gE/gI is essential for the anterograde spread of the infection throughout the host nervous system. Together with US9, the heterodimer gE/gI is involved in the sorting and transport of viral structural components toward axon tips. The polypeptide is Envelope glycoprotein E (US8) (Psittacid herpesvirus 1 (isolate Amazon parrot/-/97-0001/1997) (PsHV-1)).